The following is a 451-amino-acid chain: UPF0210 protein NMC1568 (451 aa).

It belongs to the UPF0210 family. In terms of assembly, homodimer.

The polypeptide is UPF0210 protein NMC1568 (Neisseria meningitidis serogroup C / serotype 2a (strain ATCC 700532 / DSM 15464 / FAM18)).